A 334-amino-acid polypeptide reads, in one-letter code: Thioredoxin reductase aclT (334 aa).

Residues 16–19 (GGPA), 38–43 (NASIDR), Ile93, Ala122, Asp294, and 302–303 (TL) each bind FAD.

It belongs to the class-II pyridine nucleotide-disulfide oxidoreductase family. In terms of assembly, homodimer. It depends on FAD as a cofactor.

Its pathway is mycotoxin biosynthesis. Its function is as follows. Thioredoxin reductase; part of the gene cluster that mediates the biosynthesis of aspirochlorine (or antibiotic A30641), an unusual halogenated spiro compound with distinctive antifungal properties due to selective inhibition of protein biosynthesis, and which is also active against bacteria, viruses, and murine tumor cells. The non-ribosomal peptide synthetase (NRPS) aclP is responsible the formation of the diketopiperazine (DKP) core from the condensation of 2 phenylalanine residues. One Phe residue is tailored into chlorotyrosine by hydroxylation and chlorination, whereas the second Phe undergoes an unprecedented C-C bond cleavage to be converted into glycine. After formation of the DKP, sulfur is incorporated into the DKP by conjugation with glutathione by aclG, followed by its stepwise degradation to the thiol by aclI, aclJ and aclK, and the dithiol oxidation by aclT. In addition, oxygenases (aclB, aclC, aclL and aclO) and O-methyltransferases (aclM and aclU) act as tailoring enzymes to produce the intermediate dechloroaspirochlorine. Ultimately, chlorination of dechloroaspirochlorine by the halogenase aclH is the last step in the aspirochlorine pathway. The chain is Thioredoxin reductase aclT from Aspergillus oryzae (strain ATCC 42149 / RIB 40) (Yellow koji mold).